The primary structure comprises 215 residues: Large ribosomal subunit protein uL4c (215 aa).

The disordered stretch occupies residues Q51–S87. The span at G67–G78 shows a compositional bias: basic residues.

Belongs to the universal ribosomal protein uL4 family. In terms of assembly, part of the 50S ribosomal subunit.

Its subcellular location is the plastid. The protein resides in the chloroplast. In terms of biological role, probably binds the 23S rRNA. The polypeptide is Large ribosomal subunit protein uL4c (rpl4) (Thalassiosira pseudonana (Marine diatom)).